The sequence spans 299 residues: Taste receptor type 2 member 1 (299 aa).

At 1–9 (MLESHLIIH) the chain is on the extracellular side. Residues 10-30 (FLLAVIQFLLGTFTNGIIVVV) form a helical membrane-spanning segment. Topologically, residues 31–55 (NGIDLIKHRKMAPLDLLLSCLAVSR) are cytoplasmic. The chain crosses the membrane as a helical span at residues 56-76 (IFLQLFIFYVNVIVIFFIEFI). Residues 77–81 (MCSEN) lie on the Extracellular side of the membrane. The chain crosses the membrane as a helical span at residues 82 to 102 (CAILLFINELELWLATWLGVF). At 103–124 (YCAKVASVPHPLFIWLKMKISK) the chain is on the cytoplasmic side. The helical transmembrane segment at 125 to 145 (LVPWMILGSLLYVSMTCVFHS) threads the bilayer. Residues 146-178 (KYAGFMVPYFLRNFFSQNATIQKEDTPAIQIFS) lie on the Extracellular side of the membrane. An N-linked (GlcNAc...) asparagine glycan is attached at asparagine 163. The chain crosses the membrane as a helical span at residues 179-199 (FVAEFLVPLLIFLVAVLLLIF). At 200 to 222 (SLGRHTRQMRNTVAGSRVPGRGA) the chain is on the cytoplasmic side. The helical transmembrane segment at 223–243 (PISALLSILSFVILYFSHCMI) threads the bilayer. Residues 244 to 257 (KVFLSSLKFHVRSF) lie on the Extracellular side of the membrane. A helical transmembrane segment spans residues 258–278 (ILPFFILVIGIYPSGHSLILI). Residues 279-299 (LGNXKLKQNAKKFLLHSKCCQ) lie on the Cytoplasmic side of the membrane.

It belongs to the G-protein coupled receptor T2R family.

It is found in the membrane. Its function is as follows. Receptor that may play a role in the perception of bitterness and is gustducin-linked. May play a role in sensing the chemical composition of the gastrointestinal content. The activity of this receptor may stimulate alpha gustducin, mediate PLC-beta-2 activation and lead to the gating of TRPM5. This Pongo pygmaeus (Bornean orangutan) protein is Taste receptor type 2 member 1 (TAS2R1).